A 125-amino-acid chain; its full sequence is MARIAGVNIPNHQHAEIALTAIYGIGRARAREICEAAGINVSTKMKDVTDAEMDKLRDNVAKFVVEGDLRREVSMNIKRLMDLGCYRGLRHRRGLPVRGQRTRTNARTRKGPRKAVRASSAKAGR.

Over residues 94 to 116 (GLPVRGQRTRTNARTRKGPRKAV) the composition is skewed to basic residues. A disordered region spans residues 94 to 125 (GLPVRGQRTRTNARTRKGPRKAVRASSAKAGR).

This sequence belongs to the universal ribosomal protein uS13 family. As to quaternary structure, part of the 30S ribosomal subunit. Forms a loose heterodimer with protein S19. Forms two bridges to the 50S subunit in the 70S ribosome.

Functionally, located at the top of the head of the 30S subunit, it contacts several helices of the 16S rRNA. In the 70S ribosome it contacts the 23S rRNA (bridge B1a) and protein L5 of the 50S subunit (bridge B1b), connecting the 2 subunits; these bridges are implicated in subunit movement. Contacts the tRNAs in the A and P-sites. This chain is Small ribosomal subunit protein uS13, found in Nitrosospira multiformis (strain ATCC 25196 / NCIMB 11849 / C 71).